A 147-amino-acid polypeptide reads, in one-letter code: Interleukin-4 (147 aa).

An N-terminal signal peptide occupies residues 1–24 (MGLSPHLAVTLFCFLICTGNGIHG). C47 and C87 are joined by a disulfide. N-linked (GlcNAc...) asparagine glycans are attached at residues N61, N90, and N117.

Belongs to the IL-4/IL-13 family.

It is found in the secreted. Participates in at least several B-cell activation processes as well as of other cell types. It is a costimulator of DNA-synthesis. It induces the expression of class II MHC molecules on resting B-cells. It enhances both secretion and cell surface expression of IgE and IgG1. It also regulates the expression of the low affinity Fc receptor for IgE (CD23) on both lymphocytes and monocytes. Positively regulates IL31RA expression in macrophages. Stimulates autophagy in dendritic cells by interfering with mTORC1 signaling and through the induction of RUFY4. This chain is Interleukin-4 (Il4), found in Rattus norvegicus (Rat).